Here is a 1378-residue protein sequence, read N- to C-terminus: DNA-directed RNA polymerase subunit beta (1378 aa).

This sequence belongs to the RNA polymerase beta chain family. In terms of assembly, the RNAP catalytic core consists of 2 alpha, 1 beta, 1 beta' and 1 omega subunit. When a sigma factor is associated with the core the holoenzyme is formed, which can initiate transcription.

The enzyme catalyses RNA(n) + a ribonucleoside 5'-triphosphate = RNA(n+1) + diphosphate. In terms of biological role, DNA-dependent RNA polymerase catalyzes the transcription of DNA into RNA using the four ribonucleoside triphosphates as substrates. The chain is DNA-directed RNA polymerase subunit beta from Roseobacter denitrificans (strain ATCC 33942 / OCh 114) (Erythrobacter sp. (strain OCh 114)).